The chain runs to 303 residues: Elongation factor Ts (303 aa).

The segment at threonine 79–threonine 82 is involved in Mg(2+) ion dislocation from EF-Tu.

Belongs to the EF-Ts family.

It is found in the cytoplasm. Functionally, associates with the EF-Tu.GDP complex and induces the exchange of GDP to GTP. It remains bound to the aminoacyl-tRNA.EF-Tu.GTP complex up to the GTP hydrolysis stage on the ribosome. The chain is Elongation factor Ts from Magnetococcus marinus (strain ATCC BAA-1437 / JCM 17883 / MC-1).